Reading from the N-terminus, the 135-residue chain is Small ribosomal subunit protein uS12 (135 aa).

The residue at position 89 (Asp89) is a 3-methylthioaspartic acid. Positions 101–135 are disordered; it reads SLDTSGVADRKQSRSKYGAKQPKAGAAAPAKGKGR. The segment covering 118–135 has biased composition (low complexity); sequence GAKQPKAGAAAPAKGKGR.

This sequence belongs to the universal ribosomal protein uS12 family. In terms of assembly, part of the 30S ribosomal subunit. Contacts proteins S8 and S17. May interact with IF1 in the 30S initiation complex.

Its function is as follows. With S4 and S5 plays an important role in translational accuracy. Interacts with and stabilizes bases of the 16S rRNA that are involved in tRNA selection in the A site and with the mRNA backbone. Located at the interface of the 30S and 50S subunits, it traverses the body of the 30S subunit contacting proteins on the other side and probably holding the rRNA structure together. The combined cluster of proteins S8, S12 and S17 appears to hold together the shoulder and platform of the 30S subunit. This Chlorobium limicola (strain DSM 245 / NBRC 103803 / 6330) protein is Small ribosomal subunit protein uS12.